The chain runs to 483 residues: Glutamyl-tRNA(Gln) amidotransferase subunit A (483 aa).

Residues K76 and S151 each act as charge relay system in the active site. S175 (acyl-ester intermediate) is an active-site residue.

It belongs to the amidase family. GatA subfamily. As to quaternary structure, heterotrimer of A, B and C subunits.

The enzyme catalyses L-glutamyl-tRNA(Gln) + L-glutamine + ATP + H2O = L-glutaminyl-tRNA(Gln) + L-glutamate + ADP + phosphate + H(+). Allows the formation of correctly charged Gln-tRNA(Gln) through the transamidation of misacylated Glu-tRNA(Gln) in organisms which lack glutaminyl-tRNA synthetase. The reaction takes place in the presence of glutamine and ATP through an activated gamma-phospho-Glu-tRNA(Gln). This chain is Glutamyl-tRNA(Gln) amidotransferase subunit A, found in Nitrosospira multiformis (strain ATCC 25196 / NCIMB 11849 / C 71).